We begin with the raw amino-acid sequence, 318 residues long: MDYKVSRSGEIVEGEVEDSEKIDLPPGFRFHPTDEELITHYLRPKVVNSFFSAIAIGEVDLNKVEPWDLPWKAKLGEKEWYFFCVRDRKYPTGLRTNRATKAGYWKATGKDKEIFKGKSLVGMKKTLVFYKGRAPKGVKTNWVMHEYRLEGKFAIDNLSKTAKNECVISRVFHTRTDGTKEHMSVGLPPLMDSSPYLKSRGQDSLAGTTLGGLLSHVTYFSDQTTDDKSLVADFKTTMFGSGSTNFLPNIGSLLDFDPLFLQNNSSVLKMLLDNEETQFKKNLHNSGSSESELTASSWQGHNSYGSTGPVNLDCVWKF.

The NAC domain occupies 24–174; the sequence is LPPGFRFHPT…ECVISRVFHT (151 aa). A DNA-binding region spans residues 121-180; that stretch reads VGMKKTLVFYKGRAPKGVKTNWVMHEYRLEGKFAIDNLSKTAKNECVISRVFHTRTDGTK.

Mostly expressed in root cortex, phloem, atrichoblast and quiescent center (QC), and, to a lower extent, in root endodermis, xylem, pericycle, columella and lateral root cap (LRC). Expressed in roots, cotyledons, very young leaves, senescing leaves, mature flowers and pollen.

The protein localises to the nucleus. In terms of biological role, transcription activator that binds to DNA in promoters of target genes on a specific bipartite motif 5'-[AG]CGT[AG](4-5n)[AG][CT]ACGCAA-3'. Triggers the expression of senescence-associated genes during age-, salt- and dark-induced senescence through a regulatory network that may involve cross-talk with salt- and H(2)O(2)-dependent signaling pathways. The protein is NAC domain-containing protein 59 of Arabidopsis thaliana (Mouse-ear cress).